The sequence spans 139 residues: Actin-depolymerizing factor 3 (139 aa).

Positions 7-139 (GVAVNDECML…SLDEIKDRAR (133 aa)) constitute an ADF-H domain.

Belongs to the actin-binding proteins ADF family. Expressed in all tissues except pollen.

Its subcellular location is the cytoplasm. Actin-depolymerizing protein. Severs actin filaments (F-actin) and binds to actin monomers. This Zea mays (Maize) protein is Actin-depolymerizing factor 3 (ADF3).